The sequence spans 564 residues: Phenylalanine--tRNA ligase beta subunit (564 aa).

A B5 domain is found at Tyr286–Pro362. Residues Asp340, Asp346, Glu349, and Glu350 each contribute to the Mg(2+) site.

Belongs to the phenylalanyl-tRNA synthetase beta subunit family. Type 2 subfamily. As to quaternary structure, tetramer of two alpha and two beta subunits. Mg(2+) serves as cofactor.

It is found in the cytoplasm. It carries out the reaction tRNA(Phe) + L-phenylalanine + ATP = L-phenylalanyl-tRNA(Phe) + AMP + diphosphate + H(+). This chain is Phenylalanine--tRNA ligase beta subunit, found in Borrelia turicatae (strain 91E135).